The sequence spans 99 residues: L-rhamnose mutarotase (99 aa).

Y18 is a substrate binding site. The active-site Proton donor is the H22. Residues Y41 and 76–77 (WW) each bind substrate.

This sequence belongs to the rhamnose mutarotase family. As to quaternary structure, homodimer.

Its subcellular location is the cytoplasm. The catalysed reaction is alpha-L-rhamnose = beta-L-rhamnose. It functions in the pathway carbohydrate metabolism; L-rhamnose metabolism. In terms of biological role, involved in the anomeric conversion of L-rhamnose. The chain is L-rhamnose mutarotase from Shigella boydii serotype 18 (strain CDC 3083-94 / BS512).